Reading from the N-terminus, the 427-residue chain is Glucose-1-phosphate adenylyltransferase (427 aa).

Residues Y112, G177, 192 to 193 (EK), and S210 each bind alpha-D-glucose 1-phosphate.

It belongs to the bacterial/plant glucose-1-phosphate adenylyltransferase family. In terms of assembly, homotetramer.

The catalysed reaction is alpha-D-glucose 1-phosphate + ATP + H(+) = ADP-alpha-D-glucose + diphosphate. The protein operates within glycan biosynthesis; glycogen biosynthesis. Functionally, involved in the biosynthesis of ADP-glucose, a building block required for the elongation reactions to produce glycogen. Catalyzes the reaction between ATP and alpha-D-glucose 1-phosphate (G1P) to produce pyrophosphate and ADP-Glc. This Methylobacillus flagellatus (strain ATCC 51484 / DSM 6875 / VKM B-1610 / KT) protein is Glucose-1-phosphate adenylyltransferase.